Consider the following 451-residue polypeptide: Phosphoglucosamine mutase (451 aa).

Catalysis depends on S103, which acts as the Phosphoserine intermediate. Mg(2+)-binding residues include S103, D243, D245, and D247. S103 is modified (phosphoserine).

The protein belongs to the phosphohexose mutase family. It depends on Mg(2+) as a cofactor. In terms of processing, activated by phosphorylation.

It catalyses the reaction alpha-D-glucosamine 1-phosphate = D-glucosamine 6-phosphate. Functionally, catalyzes the conversion of glucosamine-6-phosphate to glucosamine-1-phosphate. In Lactobacillus gasseri (strain ATCC 33323 / DSM 20243 / BCRC 14619 / CIP 102991 / JCM 1131 / KCTC 3163 / NCIMB 11718 / NCTC 13722 / AM63), this protein is Phosphoglucosamine mutase.